Here is a 114-residue protein sequence, read N- to C-terminus: Phosphoribosyl-AMP cyclohydrolase (114 aa).

D76 lines the Mg(2+) pocket. C77 contacts Zn(2+). Positions 78 and 80 each coordinate Mg(2+). Residues C93 and C100 each coordinate Zn(2+).

Belongs to the PRA-CH family. As to quaternary structure, homodimer. Mg(2+) is required as a cofactor. Requires Zn(2+) as cofactor.

The protein resides in the cytoplasm. It catalyses the reaction 1-(5-phospho-beta-D-ribosyl)-5'-AMP + H2O = 1-(5-phospho-beta-D-ribosyl)-5-[(5-phospho-beta-D-ribosylamino)methylideneamino]imidazole-4-carboxamide. It functions in the pathway amino-acid biosynthesis; L-histidine biosynthesis; L-histidine from 5-phospho-alpha-D-ribose 1-diphosphate: step 3/9. Its function is as follows. Catalyzes the hydrolysis of the adenine ring of phosphoribosyl-AMP. The protein is Phosphoribosyl-AMP cyclohydrolase of Streptococcus sanguinis (strain SK36).